The chain runs to 415 residues: Dynein assembly factor with WD repeat domains 1 (415 aa).

8 WD repeats span residues 90–129 (AHIL…ELNT), 132–174 (GHRN…HTFR), 175–214 (GHTA…EVYT), 217–256 (GHSA…KVNI), 259–298 (GHCA…CVAT), 301–340 (GHDD…CIAK), 343–384 (GHEG…QVLE), and 386–415 (HTDE…RIWR).

The protein belongs to the WD repeat WDR69 family. Interacts with IFT46.

It is found in the cytoplasm. It localises to the cytoskeleton. Its subcellular location is the flagellum basal body. The protein resides in the flagellum axoneme. Functionally, required for axonemal dynein assembly and ciliary motility in ciliated organs, including Kupffer's vesicle, during embryogenesis. Facilitates the onset of robust cilia motility during development. The sequence is that of Dynein assembly factor with WD repeat domains 1 from Homo sapiens (Human).